Reading from the N-terminus, the 770-residue chain is Probable zinc transporter protein DDB_G0291141 (770 aa).

The Cytoplasmic portion of the chain corresponds to 1 to 36; sequence MAGSLDDSIYNNGRSGGGGGGFKFSKGFNKDSISKR. A helical transmembrane segment spans residues 37-57; that stretch reads IIMMLFFSKGIRAWSCIILLY. The Extracellular segment spans residues 58–62; the sequence is FLQSS. The helical transmembrane segment at 63–83 threads the bilayer; that stretch reads ISIISASFYMCLFSAIFSVVV. Residues 84–100 are Cytoplasmic-facing; sequence EKPWNLLSSLRPSQIKK. Residues 101 to 117 form a helical membrane-spanning segment; the sequence is IIYHSIFNLLIIITWNS. Topologically, residues 118 to 123 are extracellular; that stretch reads SIKFIG. Residues 124–146 form a helical membrane-spanning segment; the sequence is PIGSILASDYTFSTYPLIFNSLL. Over 147-154 the chain is Cytoplasmic; sequence QGNFLATD. The helical transmembrane segment at 155–175 threads the bilayer; it reads MSRGSIMLMIGYFLIPLFGIS. Over 176-184 the chain is Extracellular; the sequence is NRLDILGYT. Residues 185–205 form a helical membrane-spanning segment; sequence SSQVFMIGLFSLIVHNVLVLW. Residues 206–224 are Cytoplasmic-facing; that stretch reads KKTIVRSWNSGSSGGKNKL. Residues 225-245 traverse the membrane as a helical segment; the sequence is SSLGSCVSTIILFVFKLFEGF. The Extracellular segment spans residues 246–262; that stretch reads SSGSSGSDSINQVSYSQ. Residues 263-283 form a helical membrane-spanning segment; it reads LFVIAIITFILYSLNQFIDDV. The Cytoplasmic portion of the chain corresponds to 284 to 291; the sequence is SEKELTFN. A helical transmembrane segment spans residues 292 to 312; it reads VLSKVSLTSSVIFGLLAALFI. At 313-316 the chain is on the extracellular side; it reads GFKD. The chain crosses the membrane as a helical span at residues 317–337; the sequence is FFHPILILSFIFIINAIHILY. Over 338–404 the chain is Cytoplasmic; that stretch reads SKSNDIQPMT…QIVDKPTSRR (67 aa). Residues 405 to 425 form a helical membrane-spanning segment; it reads IFTFLVINLMFMFVEMAYGIW. Over 426–434 the chain is Extracellular; sequence TNSLGLITD. The helical transmembrane segment at 435–455 threads the bilayer; sequence ACHMFFDATALFIALVAEVIS. Topologically, residues 456–469 are cytoplasmic; the sequence is QWKQNDKYSYGYGR. A helical membrane pass occupies residues 470–490; it reads FQVLSGFVNGIFLIFIAVTIL. The Extracellular portion of the chain corresponds to 491 to 507; the sequence is MESVERLLEPPEINTDK. The chain crosses the membrane as a helical span at residues 508 to 528; sequence LLLVSVLGFIINLIGIFSFHG. Residues 529 to 592 are Cytoplasmic-facing; that stretch reads DHGHSHGGGG…GVFLHLLADT (64 aa). Positions 532-566 are disordered; that stretch reads HSHGGGGGHSHGGGEKKEKHHGHSHGGHGDHQQVT. A helical transmembrane segment spans residues 593–613; that stretch reads LGSVGVIVSSLIIQIWGYTLA. Position 614 (Asp-614) is a topological domain, extracellular. A helical transmembrane segment spans residues 615 to 635; it reads PICSLLISILIFLSVLPLIAN. Residues 636–770 lie on the Cytoplasmic side of the membrane; the sequence is TAKTLLQCTP…SSSSHHHRHN (135 aa). Positions 751 to 770 are disordered; sequence DIHHNHSSSSSSSSHHHRHN.

This sequence belongs to the cation diffusion facilitator (CDF) transporter (TC 2.A.4) family. SLC30A subfamily.

The protein resides in the membrane. Its function is as follows. May be involved in zinc transport from the cytoplasm to either intracellular organelles or extracellular spaces. The sequence is that of Probable zinc transporter protein DDB_G0291141 from Dictyostelium discoideum (Social amoeba).